The primary structure comprises 96 residues: Integration host factor subunit beta (96 aa).

The disordered stretch occupies residues 59-86 (RVGRNPKTGETVELDGKHVPHFKPGKEL). Positions 72-86 (LDGKHVPHFKPGKEL) are enriched in basic and acidic residues.

Belongs to the bacterial histone-like protein family. As to quaternary structure, heterodimer of an alpha and a beta chain.

This protein is one of the two subunits of integration host factor, a specific DNA-binding protein that functions in genetic recombination as well as in transcriptional and translational control. The protein is Integration host factor subunit beta of Pseudoalteromonas atlantica (strain T6c / ATCC BAA-1087).